Here is a 402-residue protein sequence, read N- to C-terminus: Nicotinate phosphoribosyltransferase (402 aa).

The residue at position 224 (His224) is a Phosphohistidine; by autocatalysis.

The protein belongs to the NAPRTase family. In terms of processing, transiently phosphorylated on a His residue during the reaction cycle. Phosphorylation strongly increases the affinity for substrates and increases the rate of nicotinate D-ribonucleotide production. Dephosphorylation regenerates the low-affinity form of the enzyme, leading to product release.

The enzyme catalyses nicotinate + 5-phospho-alpha-D-ribose 1-diphosphate + ATP + H2O = nicotinate beta-D-ribonucleotide + ADP + phosphate + diphosphate. It functions in the pathway cofactor biosynthesis; NAD(+) biosynthesis; nicotinate D-ribonucleotide from nicotinate: step 1/1. Functionally, catalyzes the synthesis of beta-nicotinate D-ribonucleotide from nicotinate and 5-phospho-D-ribose 1-phosphate at the expense of ATP. The chain is Nicotinate phosphoribosyltransferase from Neisseria meningitidis serogroup A / serotype 4A (strain DSM 15465 / Z2491).